We begin with the raw amino-acid sequence, 968 residues long: RNA polymerase-associated protein RapA (968 aa).

A Helicase ATP-binding domain is found at aspartate 164–asparagine 334. Aspartate 177 to threonine 184 is an ATP binding site. The short motif at aspartate 280 to histidine 283 is the DEAH box element. A Helicase C-terminal domain is found at arginine 490–arginine 685.

The protein belongs to the SNF2/RAD54 helicase family. RapA subfamily. As to quaternary structure, interacts with the RNAP. Has a higher affinity for the core RNAP than for the holoenzyme. Its ATPase activity is stimulated by binding to RNAP.

Functionally, transcription regulator that activates transcription by stimulating RNA polymerase (RNAP) recycling in case of stress conditions such as supercoiled DNA or high salt concentrations. Probably acts by releasing the RNAP, when it is trapped or immobilized on tightly supercoiled DNA. Does not activate transcription on linear DNA. Probably not involved in DNA repair. This chain is RNA polymerase-associated protein RapA, found in Salmonella choleraesuis (strain SC-B67).